We begin with the raw amino-acid sequence, 262 residues long: Shikimate dehydrogenase (NADP(+)) (262 aa).

Residues 15-17 (SRS) and T62 contribute to the shikimate site. The Proton acceptor role is filled by K66. E78 contributes to the NADP(+) binding site. 2 residues coordinate shikimate: N87 and D102. NADP(+) contacts are provided by residues 126 to 130 (GAGGA), 150 to 155 (NRTLAR), and M214. Y216 contributes to the shikimate binding site. Residue G236 participates in NADP(+) binding.

This sequence belongs to the shikimate dehydrogenase family. As to quaternary structure, homodimer.

The catalysed reaction is shikimate + NADP(+) = 3-dehydroshikimate + NADPH + H(+). It participates in metabolic intermediate biosynthesis; chorismate biosynthesis; chorismate from D-erythrose 4-phosphate and phosphoenolpyruvate: step 4/7. Involved in the biosynthesis of the chorismate, which leads to the biosynthesis of aromatic amino acids. Catalyzes the reversible NADPH linked reduction of 3-dehydroshikimate (DHSA) to yield shikimate (SA). In Acinetobacter baumannii (strain ACICU), this protein is Shikimate dehydrogenase (NADP(+)).